Here is a 481-residue protein sequence, read N- to C-terminus: Cysteine--tRNA ligase (481 aa).

Residue cysteine 27 coordinates Zn(2+). Residues 29-39 (PTVYNYAHIGN) carry the 'HIGH' region motif. Cysteine 222, histidine 247, and glutamate 251 together coordinate Zn(2+). The 'KMSKS' region motif lies at 279-283 (KMSKS). Lysine 282 is an ATP binding site.

This sequence belongs to the class-I aminoacyl-tRNA synthetase family. Monomer. It depends on Zn(2+) as a cofactor.

The protein localises to the cytoplasm. The catalysed reaction is tRNA(Cys) + L-cysteine + ATP = L-cysteinyl-tRNA(Cys) + AMP + diphosphate. In Borrelia turicatae (strain 91E135), this protein is Cysteine--tRNA ligase.